The sequence spans 306 residues: D-alanine--D-alanine ligase B (306 aa).

Catalysis depends on residues Glu-15 and Ser-150. The ATP-grasp domain occupies 101-303 (KLLWQGAGLP…FSQLVVRILE (203 aa)). 134–189 (ISSLGLPVIVKPSREGSSVGMSKVVAENALQDALRLAFQHDEEVLIEKWLSGPEFT) contributes to the ATP binding site. The Mg(2+) site is built by Asp-257, Glu-270, and Asn-272. Ser-281 is a catalytic residue.

It belongs to the D-alanine--D-alanine ligase family. As to quaternary structure, monomer. Mg(2+) serves as cofactor. Mn(2+) is required as a cofactor.

The protein localises to the cytoplasm. The enzyme catalyses 2 D-alanine + ATP = D-alanyl-D-alanine + ADP + phosphate + H(+). Its pathway is cell wall biogenesis; peptidoglycan biosynthesis. Cell wall formation. The sequence is that of D-alanine--D-alanine ligase B from Escherichia coli O6:H1 (strain CFT073 / ATCC 700928 / UPEC).